Reading from the N-terminus, the 339-residue chain is Zinc transporter 3 (339 aa).

The signal sequence occupies residues 1-25 (MKTKNVKLLFFFFSVSLLLIAVVNA). Over 26-54 (AEGHSHGGPKCECSHEDDHENKAGARKYK) the chain is Extracellular. Residues 55–75 (IAAIPTVLIAGIIGVLFPLLG) form a helical membrane-spanning segment. The Cytoplasmic portion of the chain corresponds to 76–86 (KVFPSLRPETC). The helical transmembrane segment at 87 to 107 (FFFVTKAFAAGVILATGFMHV) threads the bilayer. Residues 108 to 123 (LPEAYEMLNSPCLTSE) lie on the Extracellular side of the membrane. A helical transmembrane segment spans residues 124–144 (AWEFPFTGFIAMIAAILTLSV). At 145 to 184 (DTFATSSFYKSHCKASKRVSDGETGESSVDSEKVQILRTR) the chain is on the cytoplasmic side. The chain crosses the membrane as a helical span at residues 185 to 205 (VIAQVLELGIIVHSVVIGISL). Topologically, residues 206–216 (GASQSPDAAKA) are extracellular. The helical transmembrane segment at 217-237 (LFIALMFHQCFEGLGLGGCIA) threads the bilayer. Residues 238–247 (QGKFKCLSVT) lie on the Cytoplasmic side of the membrane. Residues 248–268 (IMSTFFAITTPIGIVVGMGIA) traverse the membrane as a helical segment. The Extracellular segment spans residues 269-278 (NSYDESSPTA). Residues 279–299 (LIVQGVLNAASAGILIYMSLV) traverse the membrane as a helical segment. Residues 300–315 (DLLAADFTHPKMQSNT) are Cytoplasmic-facing. The helical transmembrane segment at 316 to 336 (GLQIMAHIALLLGAGLMSLLA) threads the bilayer. Residues 337 to 339 (KWA) are Extracellular-facing.

It belongs to the ZIP transporter (TC 2.A.5) family. In terms of tissue distribution, expressed predominantly in the roots of zinc-deficient plants.

The protein localises to the cell membrane. Its function is as follows. Mediates zinc uptake from the rhizosphere. May also transport other divalent cations. In Arabidopsis thaliana (Mouse-ear cress), this protein is Zinc transporter 3 (ZIP3).